Here is a 362-residue protein sequence, read N- to C-terminus: Fructose-bisphosphate aldolase (362 aa).

Position 33 (D33) interacts with dihydroxyacetone phosphate. D-glyceraldehyde 3-phosphate contacts are provided by S35 and T38. R42 contributes to the beta-D-fructose 1,6-bisphosphate binding site. K106 contributes to the D-glyceraldehyde 3-phosphate binding site. K145 contacts dihydroxyacetone phosphate. D-glyceraldehyde 3-phosphate is bound at residue E188. E188 functions as the Proton acceptor in the catalytic mechanism. Residues K230, S272, and G273 each contribute to the dihydroxyacetone phosphate site. The Schiff-base intermediate with dihydroxyacetone phosphate role is filled by K230. Residues 272–274 (SGG) and S300 each bind beta-D-fructose 1,6-bisphosphate. G302 and R303 together coordinate dihydroxyacetone phosphate. R303 is a binding site for beta-D-fructose 1,6-bisphosphate.

It belongs to the class I fructose-bisphosphate aldolase family. In terms of assembly, homotetramer. Interacts with TRAP (via cytoplasmic domain); the interaction prevents substrate binding and thereby inhibits aldolase activity. Interacts with MTRAP (via cytoplasmic domain); MTRAP phosphorylation may increase the binding to FBPA. Interact with RH1 (via cytoplasmic domain). Interacts with RH2b (via cytoplasmic domain). Interacts with RH4 (via cytoplasmic domain). Interacts with AMA1 (via cytoplasmic domain); the interaction is weak, however it may be increased upon AMA1 phosphorylation. Interacts with EBA140 (via cytoplasmic domain); the interaction is weak. Interacts with EBA175 (via cytoplasmic domain); the interaction is weak. Interacts with EBA181 (via cytoplasmic domain); the interaction is weak. Interacts with G-actin and F-actin. May interact with ACT2/actin II; the interaction inhibits FBPA catalytic activity. Interacts with human SLC4A1/band 3 (via N-terminus); the interaction inhibits FBPA catalytic activity.

The protein resides in the cytoplasm. Its subcellular location is the membrane. It is found in the host cell membrane. The catalysed reaction is beta-D-fructose 1,6-bisphosphate = D-glyceraldehyde 3-phosphate + dihydroxyacetone phosphate. Its pathway is carbohydrate degradation; glycolysis; D-glyceraldehyde 3-phosphate and glycerone phosphate from D-glucose: step 4/4. Its activity is regulated as follows. The cytoplasmic tail of TRAP and probably other adhesins acts as a competitive inhibitor as the binding sites of the glycolytic substrate fructose 1,6-bisphosphate and TRAP partially overlap. Inhibited by suramin, an antiparasitic drug used to treat Trypanosome-mediated infection. Functionally, plays a key role in glycolysis by catalyzing the cleavage of fructose 1,6-bisphosphate into dihydroxyacetone phosphate and glyceraldehyde 3-phosphate. Independently of its catalytic activity, connects the actin filaments, and thus the actomyosin motor, to cell surface adhesins of the thrombospondin-related anonymous protein (TRAP), the erythrocyte binding ligand (EBL) and reticulocyte binding homolog (RH) protein families; this interaction is probably involved in transducing the motor force across the parasite surface required for sporozoite and ookinete gliding motility and merozoite invasion. Stimulates actin polymerisation. This chain is Fructose-bisphosphate aldolase, found in Plasmodium falciparum (isolate K1 / Thailand).